Reading from the N-terminus, the 265-residue chain is Beta-lactamase SHV-4 (265 aa).

Serine 45 (acyl-ester intermediate) is an active-site residue. An intrachain disulfide couples cysteine 52 to cysteine 98. Glutamate 143 acts as the Proton acceptor in catalysis. Lysine 209–glycine 211 lines the substrate pocket.

Belongs to the class-A beta-lactamase family.

It catalyses the reaction a beta-lactam + H2O = a substituted beta-amino acid. Functionally, SHV enzymes hydrolyze broad spectrum cephalosporins notably cefotaxime and ceftazidime. SHV-4 causes particularly high levels of resistance to aztreonam and ceftazidime. The protein is Beta-lactamase SHV-4 (bla) of Klebsiella pneumoniae.